We begin with the raw amino-acid sequence, 38 residues long: Photosystem II reaction center protein L (38 aa).

Residues 17–37 form a helical membrane-spanning segment; the sequence is SLFWGLLLIFVLAVLFSSYFF.

This sequence belongs to the PsbL family. In terms of assembly, PSII is composed of 1 copy each of membrane proteins PsbA, PsbB, PsbC, PsbD, PsbE, PsbF, PsbH, PsbI, PsbJ, PsbK, PsbL, PsbM, PsbT, PsbX, PsbY, PsbZ, Psb30/Ycf12, at least 3 peripheral proteins of the oxygen-evolving complex and a large number of cofactors. It forms dimeric complexes.

The protein resides in the plastid. The protein localises to the chloroplast thylakoid membrane. One of the components of the core complex of photosystem II (PSII). PSII is a light-driven water:plastoquinone oxidoreductase that uses light energy to abstract electrons from H(2)O, generating O(2) and a proton gradient subsequently used for ATP formation. It consists of a core antenna complex that captures photons, and an electron transfer chain that converts photonic excitation into a charge separation. This subunit is found at the monomer-monomer interface and is required for correct PSII assembly and/or dimerization. In Gracilaria tenuistipitata var. liui (Red alga), this protein is Photosystem II reaction center protein L.